Consider the following 237-residue polypeptide: Probable glutathione-independent glyoxalase HSP32 (237 aa).

Active-site residues include Cys138, His139, and Glu170.

It belongs to the peptidase C56 family. HSP31-like subfamily. In terms of assembly, homodimer.

It is found in the cytoplasm. The protein localises to the P-body. It catalyses the reaction methylglyoxal + H2O = (R)-lactate + H(+). In terms of biological role, catalyzes the conversion of methylglyoxal (MG) to D-lactate in a single glutathione (GSH)-independent step. May play a role in detoxifying endogenously produced glyoxals. Involved in protection against reactive oxygen species (ROS). Important for viability in stationary phase. May negatively regulate TORC1 in response to nutrient limitation. The chain is Probable glutathione-independent glyoxalase HSP32 from Saccharomyces cerevisiae (strain ATCC 204508 / S288c) (Baker's yeast).